The following is a 519-amino-acid chain: Alternative NAD(P)H-ubiquinone oxidoreductase C1, chloroplastic/mitochondrial (519 aa).

The N-terminal 52 residues, 1-52 (MAVLSSVSSLIPFSYGATRLTSKASLASRTSGFNLSSRWNSTRNSPMLYLSR), are a transit peptide targeting the chloroplast and mitochondrion. Residue 82-118 (RVCILGGGFGGLYTALRLESLVWPEDKKPQVVLVDQS) participates in FAD binding. 246–282 (IKVAVVGCGYAGVELAATISERLQDRGIVQSINVSKN) lines the NAD(+) pocket.

It belongs to the NADH dehydrogenase family. The cofactor is FAD. As to expression, flowers, roots, leaves and stems.

It is found in the mitochondrion. The protein resides in the mitochondrion inner membrane. Its subcellular location is the plastid. The protein localises to the chloroplast. It localises to the plastoglobule. The enzyme catalyses a quinone + NADH + H(+) = a quinol + NAD(+). The catalysed reaction is a ubiquinone + NADH + H(+) = a ubiquinol + NAD(+). It carries out the reaction demethylphylloquinone + NADPH + H(+) = demethylphylloquinol + NADP(+). With respect to regulation, inhibited by dicumarol. Functionally, bifunctional oxidoreductase ables to act both on prenyl naphthoquinones and on prenyl benzoquinones. May serve a respiratory function. Involved in an electron flow toward the plastoglobule plastoquinone pool. Required for plastochromanol-8 accumulation and for phylloquinone (vitamin K1) production. Probably not directly involved in cyclic or chlororespiratory electron flows under standard growth conditions, but participates in the redox metabolism of plastoquinone-9 and the tocophrol recycling-intermediate alpha-tocopherol quinone. Catalyzes the penultimate step in the biosynthesis of vitamin K1. This is Alternative NAD(P)H-ubiquinone oxidoreductase C1, chloroplastic/mitochondrial from Arabidopsis thaliana (Mouse-ear cress).